A 1436-amino-acid polypeptide reads, in one-letter code: DNA-directed RNA polymerase subunit beta' (1436 aa).

Zn(2+) contacts are provided by cysteine 70, cysteine 72, cysteine 85, and cysteine 88. Residues aspartate 481, aspartate 483, and aspartate 485 each coordinate Mg(2+). Residues cysteine 829, cysteine 903, cysteine 910, and cysteine 913 each coordinate Zn(2+).

It belongs to the RNA polymerase beta' chain family. The RNAP catalytic core consists of 2 alpha, 1 beta, 1 beta' and 1 omega subunit. When a sigma factor is associated with the core the holoenzyme is formed, which can initiate transcription. It depends on Mg(2+) as a cofactor. The cofactor is Zn(2+).

It catalyses the reaction RNA(n) + a ribonucleoside 5'-triphosphate = RNA(n+1) + diphosphate. In terms of biological role, DNA-dependent RNA polymerase catalyzes the transcription of DNA into RNA using the four ribonucleoside triphosphates as substrates. The polypeptide is DNA-directed RNA polymerase subunit beta' (Flavobacterium johnsoniae (strain ATCC 17061 / DSM 2064 / JCM 8514 / BCRC 14874 / CCUG 350202 / NBRC 14942 / NCIMB 11054 / UW101) (Cytophaga johnsonae)).